The primary structure comprises 596 residues: Protein kinase C iota type (596 aa).

Residues 1-12 are compositionally biased toward polar residues; it reads MPTQRDSSTMSH. A disordered region spans residues 1-21; that stretch reads MPTQRDSSTMSHTVACGGGGD. P2 carries the post-translational modification N-acetylproline. The tract at residues 2 to 28 is required for interaction with RAB2; the sequence is PTQRDSSTMSHTVACGGGGDHSHQVRV. Positions 2-253 are regulatory domain; that stretch reads PTQRDSSTMS…KASSSLGLQD (252 aa). The residue at position 3 (T3) is a Phosphothreonine. A phosphoserine mark is found at S7 and S8. T9 is subject to Phosphothreonine. A PB1 domain is found at 25–108; it reads QVRVKAYYRG…SELLIHVFPC (84 aa). Residues 72 to 91 form an interaction with PARD6A region; it reads DEEGDPCTVSSQLELEEAFR. The Pseudosubstrate motif lies at 125–134; that stretch reads YRRGARRWRK. Residues 140-190 form a Phorbol-ester/DAG-type zinc finger; it reads GHTFQAKRFNRRAHCAICTDRIWGLGRQGYKCINCKLLVHKKCHKLVTIEC. In terms of domain architecture, Protein kinase spans 254 to 522; it reads FDLLRVIGRG…FADIQGHPFF (269 aa). ATP is bound at residue 260–268; sequence IGRGSYAKV. Phosphotyrosine; by SRC is present on residues Y265 and Y280. ATP is bound at residue K283. At Y334 the chain carries Phosphotyrosine; by SRC. The active-site Proton acceptor is the D378. T412 is subject to Phosphothreonine; by PDPK1. Residues 523 to 594 form the AGC-kinase C-terminal domain; sequence RNVDWDMMEQ…INPLLMSAEE (72 aa). The residue at position 564 (T564) is a Phosphothreonine.

Belongs to the protein kinase superfamily. AGC Ser/Thr protein kinase family. PKC subfamily. Forms a complex with SQSTM1 and MP2K5. Interacts directly with SQSTM1. Interacts with IKBKB. Interacts with PARD6A, PARD6B and PARD6G. Part of a quaternary complex containing aPKC, PARD3, a PARD6 protein (PARD6A, PARD6B or PARD6G) and a GTPase protein (CDC42 or RAC1). Part of a complex with LLGL1 and PARD6B. Interacts with ADAP1/CENTA1. Interaction with SMG1, through the ZN-finger domain, activates the kinase activity. Interacts with CDK7. Forms a complex with RAB2A and GAPDH involved in recruitment onto the membrane of vesicular tubular clusters (VTCs). Interacts with ECT2 ('Thr-359' phosphorylated form). Interacts with VAMP2. Interacts with WDFY2 (via WD repeats 1-3). In terms of processing, phosphorylation at Thr-412 in the activation loop is not mandatory for activation. Upon neuronal growth factor (NGF) stimulation, phosphorylated by SRC at Tyr-265, Tyr-280 and Tyr-334. Phosphorylation at Tyr-265 facilitates binding to KPNB1/importin-beta regulating entry of PRKCI into the nucleus. Phosphorylation on Tyr-334 is important for NF-kappa-B stimulation. Phosphorylated at Thr-564 during the initial phase of long term potentiation. In terms of tissue distribution, expressed in dorsal hippocampus (at protein level).

It localises to the cytoplasm. The protein localises to the membrane. It is found in the endosome. Its subcellular location is the nucleus. It carries out the reaction L-seryl-[protein] + ATP = O-phospho-L-seryl-[protein] + ADP + H(+). It catalyses the reaction L-threonyl-[protein] + ATP = O-phospho-L-threonyl-[protein] + ADP + H(+). Its activity is regulated as follows. Atypical PKCs (PRKCI and PRKCZ) exhibit an elevated basal enzymatic activity (that may be due to the interaction with SMG1 or SQSTM1) and are not regulated by diacylglycerol, phosphatidylserine, phorbol esters or calcium ions. Two specific sites, Thr-412 (activation loop of the kinase domain) and Thr-564 (turn motif), need to be phosphorylated for its full activation. Might also be a target for novel lipid activators that are elevated during nutrient-stimulated insulin secretion. Functionally, calcium- and diacylglycerol-independent serine/ threonine-protein kinase that plays a general protective role against apoptotic stimuli, is involved in NF-kappa-B activation, cell survival, differentiation and polarity, and contributes to the regulation of microtubule dynamics in the early secretory pathway. Is necessary for BCR-ABL oncogene-mediated resistance to apoptotic drug in leukemia cells, protecting leukemia cells against drug-induced apoptosis. In cultured neurons, prevents amyloid beta protein-induced apoptosis by interrupting cell death process at a very early step. In glioblastoma cells, may function downstream of phosphatidylinositol 3-kinase (PI3K) and PDPK1 in the promotion of cell survival by phosphorylating and inhibiting the pro-apoptotic factor BAD. Can form a protein complex in non-small cell lung cancer (NSCLC) cells with PARD6A and ECT2 and regulate ECT2 oncogenic activity by phosphorylation, which in turn promotes transformed growth and invasion. In response to nerve growth factor (NGF), acts downstream of SRC to phosphorylate and activate IRAK1, allowing the subsequent activation of NF-kappa-B and neuronal cell survival. Functions in the organization of the apical domain in epithelial cells by phosphorylating EZR. This step is crucial for activation and normal distribution of EZR at the early stages of intestinal epithelial cell differentiation. Forms a protein complex with LLGL1 and PARD6B independently of PARD3 to regulate epithelial cell polarity. Plays a role in microtubule dynamics in the early secretory pathway through interaction with RAB2A and GAPDH and recruitment to vesicular tubular clusters (VTCs). In human coronary artery endothelial cells (HCAEC), is activated by saturated fatty acids and mediates lipid-induced apoptosis. Downstream of PI3K is required for insulin-stimulated glucose transport. Activates RAB4A and promotes its association with KIF3A which is required for the insulin-induced SLC2A4/GLUT4 translocation in adipocytes. Is essential in early embryogenesis and development of differentiating photoreceptors by playing a role in the establishment of epithelial and neuronal polarity. Involved in early synaptic long term potentiation phase in CA1 hippocampal cells and short term memory formation. The chain is Protein kinase C iota type (Prkci) from Rattus norvegicus (Rat).